The chain runs to 91 residues: MQRNLVVLLFLGMVALSSCGLREKHFQKLVKYAVPEGTLRTIIQTAVHKLGKTQFGCPAYQGYCDDHCQDIKKQEGFCHGFKCKCGIPMGF.

The first 19 residues, 1 to 19, serve as a signal peptide directing secretion; sequence MQRNLVVLLFLGMVALSSC. Positions 20–27 are excised as a propeptide; that stretch reads GLREKHFQ. A BetaSPN-type CS-alpha/beta domain is found at 54–91; it reads QFGCPAYQGYCDDHCQDIKKQEGFCHGFKCKCGIPMGF. 3 disulfides stabilise this stretch: Cys-57-Cys-78, Cys-64-Cys-83, and Cys-68-Cys-85.

The protein belongs to the long chain scorpion toxin family. Class 1 subfamily. As to expression, expressed by the venom gland.

It is found in the secreted. Inhibits voltage-gated potassium channel. The sequence is that of Potassium channel toxin Meg-beta-KTx1 from Mesobuthus gibbosus (Mediterranean checkered scorpion).